We begin with the raw amino-acid sequence, 564 residues long: NAD-dependent malic enzyme (564 aa).

The active-site Proton donor is the Tyr102. Arg155 is a binding site for NAD(+). The active-site Proton acceptor is the Lys173. Positions 244, 245, and 268 each coordinate a divalent metal cation. NAD(+) is bound by residues Asp268 and Asn417.

The protein belongs to the malic enzymes family. As to quaternary structure, homotetramer. Requires Mg(2+) as cofactor. The cofactor is Mn(2+).

The enzyme catalyses (S)-malate + NAD(+) = pyruvate + CO2 + NADH. The catalysed reaction is oxaloacetate + H(+) = pyruvate + CO2. The sequence is that of NAD-dependent malic enzyme from Pseudomonas aeruginosa (strain LESB58).